The sequence spans 271 residues: ABC transporter I family member 10 (271 aa).

The ABC transporter domain occupies 40–267 (VECRNLCFSV…IKAKQSSYID (228 aa)). 77–84 (GPNGCGKS) is an ATP binding site.

The protein belongs to the ABC transporter superfamily. ABCI family.

The protein is ABC transporter I family member 10 (ABCI10) of Arabidopsis thaliana (Mouse-ear cress).